Reading from the N-terminus, the 1196-residue chain is Ice nucleation protein (1196 aa).

An octapeptide periodicity region spans residues 172–1147 (ATYGSTLSGD…LSAGEDSTLI (976 aa)). Disordered stretches follow at residues 269 to 304 (GYGS…GYGS), 319 to 352 (GSTQ…GYGS), and 415 to 442 (GSTQ…GSNL). Composition is skewed to polar residues over residues 271 to 298 (GSTQ…GSNL) and 319 to 346 (GSTQ…GSNL).

It belongs to the bacterial ice nucleation protein family. As to quaternary structure, membrane environment or aggregation seems to be required for ice nucleation activity.

Its subcellular location is the cell outer membrane. Its function is as follows. Ice nucleation proteins enable bacteria to nucleate crystallization in supercooled water. This Pseudomonas syringae protein is Ice nucleation protein (inaV).